The chain runs to 455 residues: Glutamyl-tRNA reductase (455 aa).

Residues 49 to 52 (TCNR), Ser109, 114 to 116 (ETQ), and Gln120 contribute to the substrate site. The Nucleophile role is filled by Cys50. Residue 189 to 194 (GAGKMG) coordinates NADP(+).

The protein belongs to the glutamyl-tRNA reductase family. As to quaternary structure, homodimer.

The catalysed reaction is (S)-4-amino-5-oxopentanoate + tRNA(Glu) + NADP(+) = L-glutamyl-tRNA(Glu) + NADPH + H(+). Its pathway is porphyrin-containing compound metabolism; protoporphyrin-IX biosynthesis; 5-aminolevulinate from L-glutamyl-tRNA(Glu): step 1/2. Catalyzes the NADPH-dependent reduction of glutamyl-tRNA(Glu) to glutamate 1-semialdehyde (GSA). The polypeptide is Glutamyl-tRNA reductase (Bacillus pumilus (strain SAFR-032)).